The sequence spans 177 residues: Large ribosomal subunit protein uL6 (177 aa).

It belongs to the universal ribosomal protein uL6 family. In terms of assembly, part of the 50S ribosomal subunit.

This protein binds to the 23S rRNA, and is important in its secondary structure. It is located near the subunit interface in the base of the L7/L12 stalk, and near the tRNA binding site of the peptidyltransferase center. The sequence is that of Large ribosomal subunit protein uL6 from Xanthobacter autotrophicus (strain ATCC BAA-1158 / Py2).